A 247-amino-acid chain; its full sequence is ATP synthase subunit a, chloroplastic (247 aa).

The next 5 membrane-spanning stretches (helical) occupy residues 38 to 58 (QVLI…TLAV), 95 to 115 (VPFI…GALL), 134 to 154 (INTT…AGLT), 199 to 219 (LVVV…VMFL), and 220 to 240 (GLFT…AYIG).

Belongs to the ATPase A chain family. As to quaternary structure, F-type ATPases have 2 components, CF(1) - the catalytic core - and CF(0) - the membrane proton channel. CF(1) has five subunits: alpha(3), beta(3), gamma(1), delta(1), epsilon(1). CF(0) has four main subunits: a, b, b' and c.

It localises to the plastid. The protein localises to the chloroplast thylakoid membrane. Functionally, key component of the proton channel; it plays a direct role in the translocation of protons across the membrane. In Jasminum nudiflorum (Winter jasmine), this protein is ATP synthase subunit a, chloroplastic.